We begin with the raw amino-acid sequence, 664 residues long: DNA ligase (664 aa).

NAD(+) contacts are provided by residues 32–36 and 80–81; these read DKEYD and SL. The active-site N6-AMP-lysine intermediate is the Lys122. NAD(+) is bound by residues Arg144, Glu178, and Lys314. Zn(2+) contacts are provided by Cys407, Cys410, Cys423, and Cys429. Positions 587 to 664 constitute a BRCT domain; that stretch reads IDENPFMGKT…NEEEFSNKIK (78 aa).

This sequence belongs to the NAD-dependent DNA ligase family. LigA subfamily. Mg(2+) is required as a cofactor. The cofactor is Mn(2+).

The enzyme catalyses NAD(+) + (deoxyribonucleotide)n-3'-hydroxyl + 5'-phospho-(deoxyribonucleotide)m = (deoxyribonucleotide)n+m + AMP + beta-nicotinamide D-nucleotide.. DNA ligase that catalyzes the formation of phosphodiester linkages between 5'-phosphoryl and 3'-hydroxyl groups in double-stranded DNA using NAD as a coenzyme and as the energy source for the reaction. It is essential for DNA replication and repair of damaged DNA. The sequence is that of DNA ligase from Clostridium botulinum (strain 657 / Type Ba4).